The following is a 351-amino-acid chain: Phosphate acyltransferase (351 aa).

Belongs to the PlsX family. In terms of assembly, homodimer. Probably interacts with PlsY.

It localises to the cytoplasm. The catalysed reaction is a fatty acyl-[ACP] + phosphate = an acyl phosphate + holo-[ACP]. It functions in the pathway lipid metabolism; phospholipid metabolism. In terms of biological role, catalyzes the reversible formation of acyl-phosphate (acyl-PO(4)) from acyl-[acyl-carrier-protein] (acyl-ACP). This enzyme utilizes acyl-ACP as fatty acyl donor, but not acyl-CoA. The sequence is that of Phosphate acyltransferase from Neisseria meningitidis serogroup C / serotype 2a (strain ATCC 700532 / DSM 15464 / FAM18).